Consider the following 172-residue polypeptide: Adenine phosphoribosyltransferase (172 aa).

Belongs to the purine/pyrimidine phosphoribosyltransferase family. Homodimer.

It localises to the cytoplasm. The enzyme catalyses AMP + diphosphate = 5-phospho-alpha-D-ribose 1-diphosphate + adenine. The protein operates within purine metabolism; AMP biosynthesis via salvage pathway; AMP from adenine: step 1/1. Functionally, catalyzes a salvage reaction resulting in the formation of AMP, that is energically less costly than de novo synthesis. This Staphylococcus haemolyticus (strain JCSC1435) protein is Adenine phosphoribosyltransferase.